The chain runs to 170 residues: MKPTERRILLGRIVGAFGVKGELKLESWTEPRSAIFRYQPWIVRTPSGQESVLSGVRGRDQGKNLIAVFPDITDRDTVEAMHGTEIYVARSALPPPKPDEYYWVDLEGLQVETVEGVKLGTVSHLFSTGSNDVVVVRGDRERMIPFVLPEYVKSVDFEANLIVVDWDPDF.

A PRC barrel domain is found at 98-170 (PDEYYWVDLE…LIVVDWDPDF (73 aa)).

It belongs to the RimM family. As to quaternary structure, binds ribosomal protein uS19.

The protein resides in the cytoplasm. Its function is as follows. An accessory protein needed during the final step in the assembly of 30S ribosomal subunit, possibly for assembly of the head region. Essential for efficient processing of 16S rRNA. May be needed both before and after RbfA during the maturation of 16S rRNA. It has affinity for free ribosomal 30S subunits but not for 70S ribosomes. This is Ribosome maturation factor RimM from Xanthomonas campestris pv. campestris (strain 8004).